The primary structure comprises 925 residues: Neuronal PAS domain-containing protein 3 (925 aa).

Positions 58 to 111 constitute a bHLH domain; it reads LRKEKSRDAARSRRGKENFEFYELAKLLPLPAAITSQLDKASIIRLTISYLKMR. The tract at residues 60-71 is DNA-binding; the sequence is KEKSRDAARSRR. 2 disordered regions span residues 119–138 and 219–257; these read PPWN…KGAQ and LPPG…SPSL. One can recognise a PAS 1 domain in the interval 152–222; it reads EAHLGSHILQ…EQLGMKLPPG (71 aa). Residues 234–256 show a composition bias toward low complexity; that stretch reads AASSASSSSQSETPEPVETTSPS. The PAS 2 domain occupies 324 to 394; it reads PPPTINEVRI…HSHLDLLNKG (71 aa). A PAC domain is found at 398-441; it reads TKYYRWMQKNGGYIWIQSSATIAINAKNANEKNIIWVNYLLSNP. Disordered stretches follow at residues 457-555, 576-645, and 664-774; these read PEKA…FGAL, PCES…SSPH, and NESS…GASN. 2 stretches are compositionally biased toward basic and acidic residues: residues 484–493 and 529–549; these read ENSKSDEKGN and DSRD…KAAE. The span at 601 to 622 shows a compositional bias: basic residues; sequence KHQKRKRRRKRQKGGSASRRRL. Residues 680 to 690 are compositionally biased toward polar residues; the sequence is NESPYSMTKPP. Gly residues-rich tracts occupy residues 700-710 and 760-771; these read GQGGSIGGGGA and GGGAGSGGGGPG.

Efficient DNA binding requires dimerization with another bHLH protein. Interacts with ARNT; forms a heterodimer that binds core DNA sequence 5'-[AG]CGTG-3' within the hypoxia response element (HRE) of target gene promoters. As to expression, detected exclusively in adult brain in inhibitory interneurons.

The protein resides in the nucleus. Functionally, may play a broad role in neurogenesis. May control regulatory pathways relevant to schizophrenia and to psychotic illness. The sequence is that of Neuronal PAS domain-containing protein 3 (Npas3) from Mus musculus (Mouse).